Consider the following 503-residue polypeptide: Zinc-regulated transporter 3 (503 aa).

3 helical membrane passes run 8-28, 42-62, and 75-95; these read LLFS…VPLL, LVNY…LYML, and FPGL…VHAF. The disordered stretch occupies residues 112-171; the sequence is GSHIHSKSHSHSHSHSHADSHSNFSNDHDLENAPSEHGYATSSSSVSENDPLITKDSDRP. The segment covering 115 to 126 has biased composition (basic residues); it reads IHSKSHSHSHSH. The span at 127 to 142 shows a compositional bias: basic and acidic residues; the sequence is SHADSHSNFSNDHDLE. Phosphoserine occurs at positions 178 and 188. 2 disordered regions span residues 221 to 244 and 274 to 295; these read QSER…DKDH and HHSS…FSSP. A compositionally biased stretch (polar residues) spans 280-295; the sequence is PENYGSNQLSHSFSSP. Transmembrane regions (helical) follow at residues 336 to 356, 371 to 391, 398 to 418, 438 to 458, and 482 to 502; these read IGMQ…FIIF, IFLS…LPFY, WVAI…GALI, LLSV…QTGI, and GTTC…SALF.

Belongs to the ZIP transporter (TC 2.A.5) family.

The protein resides in the vacuole membrane. Its function is as follows. Transports zinc from storage in the vacuole to the cytoplasm. This is Zinc-regulated transporter 3 (ZRT3) from Saccharomyces cerevisiae (strain ATCC 204508 / S288c) (Baker's yeast).